The following is a 234-amino-acid chain: UDP-2,3-diacylglucosamine hydrolase (234 aa).

The Mn(2+) site is built by aspartate 9, histidine 11, aspartate 42, asparagine 80, and histidine 115. Position 80–81 (80–81) interacts with substrate; it reads NR. Substrate-binding residues include aspartate 123, serine 161, lysine 165, lysine 168, and histidine 196. The Mn(2+) site is built by histidine 196 and histidine 198.

This sequence belongs to the LpxH family. Mn(2+) serves as cofactor.

It is found in the cell inner membrane. It catalyses the reaction UDP-2-N,3-O-bis[(3R)-3-hydroxytetradecanoyl]-alpha-D-glucosamine + H2O = 2-N,3-O-bis[(3R)-3-hydroxytetradecanoyl]-alpha-D-glucosaminyl 1-phosphate + UMP + 2 H(+). It functions in the pathway glycolipid biosynthesis; lipid IV(A) biosynthesis; lipid IV(A) from (3R)-3-hydroxytetradecanoyl-[acyl-carrier-protein] and UDP-N-acetyl-alpha-D-glucosamine: step 4/6. Functionally, hydrolyzes the pyrophosphate bond of UDP-2,3-diacylglucosamine to yield 2,3-diacylglucosamine 1-phosphate (lipid X) and UMP by catalyzing the attack of water at the alpha-P atom. Involved in the biosynthesis of lipid A, a phosphorylated glycolipid that anchors the lipopolysaccharide to the outer membrane of the cell. The polypeptide is UDP-2,3-diacylglucosamine hydrolase (Histophilus somni (strain 2336) (Haemophilus somnus)).